Reading from the N-terminus, the 75-residue chain is Scuwaprin-a (75 aa).

A signal peptide spans 1–24 (MSSGGLLLLLGLLTLWAELTPVSG). Residues 27–72 (RPKKPGLCPPRPQKPPCVKECKNDWSCPGQQKCCSYGCIDECRDPI) form the WAP domain. 4 disulfide bridges follow: C34/C60, C43/C64, C47/C59, and C53/C68.

It belongs to the venom waprin family. Expressed by the venom gland.

It is found in the secreted. Its function is as follows. Damages membranes of susceptible bacteria. Has no hemolytic activity. Not toxic to mice. Does not inhibit the proteinases elastase and cathepsin G. This chain is Scuwaprin-a, found in Oxyuranus scutellatus scutellatus (Australian taipan).